A 246-amino-acid polypeptide reads, in one-letter code: NAD(P)H-quinone oxidoreductase subunit K (246 aa).

[4Fe-4S] cluster is bound by residues Cys-62, Cys-63, Cys-127, and Cys-158.

The protein belongs to the complex I 20 kDa subunit family. NDH-1 can be composed of about 15 different subunits; different subcomplexes with different compositions have been identified which probably have different functions. The cofactor is [4Fe-4S] cluster.

It is found in the cellular thylakoid membrane. The enzyme catalyses a plastoquinone + NADH + (n+1) H(+)(in) = a plastoquinol + NAD(+) + n H(+)(out). It catalyses the reaction a plastoquinone + NADPH + (n+1) H(+)(in) = a plastoquinol + NADP(+) + n H(+)(out). Functionally, NDH-1 shuttles electrons from an unknown electron donor, via FMN and iron-sulfur (Fe-S) centers, to quinones in the respiratory and/or the photosynthetic chain. The immediate electron acceptor for the enzyme in this species is believed to be plastoquinone. Couples the redox reaction to proton translocation, and thus conserves the redox energy in a proton gradient. Cyanobacterial NDH-1 also plays a role in inorganic carbon-concentration. The sequence is that of NAD(P)H-quinone oxidoreductase subunit K from Parasynechococcus marenigrum (strain WH8102).